Reading from the N-terminus, the 574-residue chain is Probable inactive serine/threonine-protein kinase slob2 (574 aa).

A helical membrane pass occupies residues 6-26; sequence YIIIAAVGGFAILTFIIIVVL. One can recognise a Protein kinase domain in the interval 166 to 346; that stretch reads YADRGSLRDF…PLHRLTYTSR (181 aa). Residue Asn-358 is glycosylated (N-linked (GlcNAc...) asparagine). The tract at residues 366–386 is disordered; the sequence is SKPNSKDLSQPKLKDLKKQKK. N-linked (GlcNAc...) asparagine glycans are attached at residues Asn-440, Asn-449, Asn-453, Asn-456, Asn-464, Asn-470, Asn-477, and Asn-483. A compositionally biased stretch (low complexity) spans 450–493; it reads TTTNTTNTSTSSSLNSSFNSNVSTSYSNATTTTNTTSASSVSPP. The interval 450-574 is disordered; sequence TTTNTTNTST…DKSGPLLKKS (125 aa). Residues 494–539 show a composition bias toward pro residues; that stretch reads ISSPPPPPPPPPPSKSSGPPPPPPPPPKSSGPPPPPPPKSSPPPPA. Over residues 546–556 the composition is skewed to low complexity; it reads LLSSIESFSSS.

The protein belongs to the protein kinase superfamily. Ser/Thr protein kinase family.

It is found in the membrane. This is Probable inactive serine/threonine-protein kinase slob2 (slob2) from Dictyostelium discoideum (Social amoeba).